The primary structure comprises 397 residues: Gastric triacylglycerol lipase (397 aa).

A signal peptide spans 1 to 19 (MWWLLVTVCFIHMSGNAFC). N-linked (GlcNAc...) asparagine glycosylation occurs at Asn33. Positions 77 to 376 (PVVFLQHGLL…PNYNHLDFIW (300 aa)) constitute an AB hydrolase-1 domain. Ser171 serves as the catalytic Nucleophile. Cysteines 245 and 254 form a disulfide. Asn270 and Asn326 each carry an N-linked (GlcNAc...) asparagine glycan. Active-site charge relay system residues include Asp342 and His371.

It belongs to the AB hydrolase superfamily. Lipase family.

The protein resides in the secreted. It catalyses the reaction a triacylglycerol + H2O = a diacylglycerol + a fatty acid + H(+). It carries out the reaction 1,2,3-tri-(9Z-octadecenoyl)-glycerol + H2O = 1,2-di-(9Z-octadecenoyl)-sn-glycerol + (9Z)-octadecenoate + H(+). The catalysed reaction is 1,2,3-trioctanoylglycerol + H2O = 1,2-dioctanoyl-sn-glycerol + octanoate + H(+). With respect to regulation, inhibited by diethylp-nitrophenyl phosphate but not inhibited by thiol reagents 5,5'-dithiobis(2-nitrobenzoic acid) or 4,4'-dithiopyridine. Catalyzes the hydrolysis of triacylglycerols to yield free fatty acids, diacylglycerol, monoacylglycerol, and glycerol. Shows a preferential hydrolysis at the sn-3 position of triacylglycerol. The sequence is that of Gastric triacylglycerol lipase (LIPF) from Bos taurus (Bovine).